The primary structure comprises 996 residues: Sodium/potassium-transporting ATPase subunit alpha-A (996 aa).

A run of 2 helical transmembrane segments spans residues 73-93 and 107-123; these read LFGG…IAYT and LYLG…TGCF. Positions 191–211 are disordered; the sequence is DNSSLTGESEPQSRSTECTND. A run of 2 helical transmembrane segments spans residues 268–290 and 297–325; these read FIHI…SFLY and AAIF…TLTA. Asp353 serves as the catalytic 4-aspartylphosphate intermediate. Lys483 lines the ATP pocket. Positions 692 and 696 each coordinate Mg(2+). The next 4 helical transmembrane spans lie at 762–785, 820–847, 889–909, and 926–951; these read LSPF…ILCI, ERLI…VIMG, YTCH…DLII, and TLNF…DKGL.

Belongs to the cation transport ATPase (P-type) (TC 3.A.3) family. Type IIC subfamily. The sodium/potassium-transporting ATPase is composed of a catalytic alpha subunit, an auxiliary non-catalytic beta subunit and an additional regulatory subunit.

The protein localises to the cell membrane. The catalysed reaction is K(+)(out) + Na(+)(in) + ATP + H2O = K(+)(in) + Na(+)(out) + ADP + phosphate + H(+). Functionally, this is the catalytic component of the active enzyme, which catalyzes the hydrolysis of ATP coupled with the exchange of sodium and potassium ions across the plasma membrane. This action creates the electrochemical gradient of sodium and potassium ions, providing the energy for active transport of various nutrients. In Artemia franciscana (Brine shrimp), this protein is Sodium/potassium-transporting ATPase subunit alpha-A.